Here is a 344-residue protein sequence, read N- to C-terminus: MTATLERRESANLWARFCDWITSTENRLYIGWFGVLMFPLLLTATSVFIIAFIAAPPVDIDGIREPVAGSLLYGNNIISGAIVPSSAAIGLHFYPIWEAASVDEWLYNGGPYELIVLHFLLGVACYMGREWELSFRLGMRPWIAVAYSAPVAAATAVFLIYPIGQGSFSDGMPLGISGTFNFMIVFQAEHNILMHPFHMLGVAGVFGGSLFSAMHGSLVTSSLIRETTENESVNSGYKFGQEFETYNIVAAHGYFGRLIFQYASFNNSRSLHFFLAAWPVVCIWFTALGISTMAFNLNGFNFNQSVVDSQGRVINTWADIINRANLGMEVMHERNAHNFPLDLA.

Thr2 bears the N-acetylthreonine mark. Residue Thr2 is modified to Phosphothreonine. Helical transmembrane passes span 29 to 46 (YIGW…TATS), 118 to 133 (HFLL…EWEL), and 142 to 156 (WIAV…AATA). Position 118 (His118) interacts with chlorophyll a. A pheophytin a-binding site is contributed by Tyr126. The [CaMn4O5] cluster site is built by Asp170 and Glu189. The helical transmembrane segment at 197–218 (FHMLGVAGVFGGSLFSAMHGSL) threads the bilayer. His198 contacts chlorophyll a. A quinone-binding positions include His215 and 264 to 265 (SF). A Fe cation-binding site is contributed by His215. His272 is a Fe cation binding site. A helical transmembrane segment spans residues 274 to 288 (FLAAWPVVCIWFTAL). Residues His332, Glu333, Asp342, and Ala344 each coordinate [CaMn4O5] cluster.

This sequence belongs to the reaction center PufL/M/PsbA/D family. In terms of assembly, PSII is composed of 1 copy each of membrane proteins PsbA, PsbB, PsbC, PsbD, PsbE, PsbF, PsbH, PsbI, PsbJ, PsbK, PsbL, PsbM, PsbT, PsbX, PsbY, PsbZ, Psb30/Ycf12, at least 3 peripheral proteins of the oxygen-evolving complex and a large number of cofactors. It forms dimeric complexes. Requires The D1/D2 heterodimer binds P680, chlorophylls that are the primary electron donor of PSII, and subsequent electron acceptors. It shares a non-heme iron and each subunit binds pheophytin, quinone, additional chlorophylls, carotenoids and lipids. D1 provides most of the ligands for the Mn4-Ca-O5 cluster of the oxygen-evolving complex (OEC). There is also a Cl(-1) ion associated with D1 and D2, which is required for oxygen evolution. The PSII complex binds additional chlorophylls, carotenoids and specific lipids. as cofactor. Post-translationally, tyr-161 forms a radical intermediate that is referred to as redox-active TyrZ, YZ or Y-Z.

Its subcellular location is the plastid. The protein resides in the chloroplast thylakoid membrane. The catalysed reaction is 2 a plastoquinone + 4 hnu + 2 H2O = 2 a plastoquinol + O2. Its function is as follows. Photosystem II (PSII) is a light-driven water:plastoquinone oxidoreductase that uses light energy to abstract electrons from H(2)O, generating O(2) and a proton gradient subsequently used for ATP formation. It consists of a core antenna complex that captures photons, and an electron transfer chain that converts photonic excitation into a charge separation. The D1/D2 (PsbA/PsbD) reaction center heterodimer binds P680, the primary electron donor of PSII as well as several subsequent electron acceptors. The chain is Photosystem II protein D1 from Staurastrum punctulatum (Green alga).